Here is a 318-residue protein sequence, read N- to C-terminus: tRNA dimethylallyltransferase (318 aa).

ATP is bound at residue 21 to 28 (GPTATGKS). 23–28 (TATGKS) contributes to the substrate binding site. An interaction with substrate tRNA region spans residues 46 to 49 (DSMQ).

The protein belongs to the IPP transferase family. In terms of assembly, monomer. Mg(2+) is required as a cofactor.

It catalyses the reaction adenosine(37) in tRNA + dimethylallyl diphosphate = N(6)-dimethylallyladenosine(37) in tRNA + diphosphate. Catalyzes the transfer of a dimethylallyl group onto the adenine at position 37 in tRNAs that read codons beginning with uridine, leading to the formation of N6-(dimethylallyl)adenosine (i(6)A). The sequence is that of tRNA dimethylallyltransferase from Acidothermus cellulolyticus (strain ATCC 43068 / DSM 8971 / 11B).